A 168-amino-acid chain; its full sequence is Peptide deformylase 1 (168 aa).

2 residues coordinate Fe cation: cysteine 91 and histidine 133. Residue glutamate 134 is part of the active site. Histidine 137 contacts Fe cation.

It belongs to the polypeptide deformylase family. Fe(2+) is required as a cofactor.

The enzyme catalyses N-terminal N-formyl-L-methionyl-[peptide] + H2O = N-terminal L-methionyl-[peptide] + formate. Its function is as follows. Removes the formyl group from the N-terminal Met of newly synthesized proteins. Requires at least a dipeptide for an efficient rate of reaction. N-terminal L-methionine is a prerequisite for activity but the enzyme has broad specificity at other positions. The protein is Peptide deformylase 1 of Vibrio vulnificus (strain YJ016).